The sequence spans 443 residues: Threonine/serine transporter TdcC (443 aa).

11 consecutive transmembrane segments (helical) span residues 22–42 (TTWT…FFPI), 44–64 (AGFG…PIAF), 97–117 (GVVI…IYGV), 140–160 (VVAL…KDLM), 163–183 (VMSY…LSLI), 207–227 (ILVT…FSPI), 259–279 (ASML…FTLS), 319–339 (ASII…LGTL), 366–386 (LSMV…PNIL), 389–409 (IEAM…MYAI), and 423–443 (DNLF…YKLF).

Belongs to the amino acid/polyamine transporter 2 family. SdaC/TdcC subfamily.

It is found in the cell inner membrane. It carries out the reaction L-threonine(in) + H(+)(in) = L-threonine(out) + H(+)(out). The catalysed reaction is L-serine(in) + H(+)(in) = L-serine(out) + H(+)(out). In terms of biological role, involved in the import of threonine and serine into the cell, with the concomitant import of a proton (symport system). The polypeptide is Threonine/serine transporter TdcC (Klebsiella pneumoniae (strain 342)).